Here is a 238-residue protein sequence, read N- to C-terminus: Demethylmenaquinone methyltransferase (238 aa).

Residues threonine 60, aspartate 81, and 108–109 (NA) each bind S-adenosyl-L-methionine.

This sequence belongs to the class I-like SAM-binding methyltransferase superfamily. MenG/UbiE family.

It catalyses the reaction a 2-demethylmenaquinol + S-adenosyl-L-methionine = a menaquinol + S-adenosyl-L-homocysteine + H(+). It functions in the pathway quinol/quinone metabolism; menaquinone biosynthesis; menaquinol from 1,4-dihydroxy-2-naphthoate: step 2/2. In terms of biological role, methyltransferase required for the conversion of demethylmenaquinol (DMKH2) to menaquinol (MKH2). In Oceanobacillus iheyensis (strain DSM 14371 / CIP 107618 / JCM 11309 / KCTC 3954 / HTE831), this protein is Demethylmenaquinone methyltransferase.